We begin with the raw amino-acid sequence, 95 residues long: UPF0473 protein ABC1595 (95 aa).

The protein belongs to the UPF0473 family.

The polypeptide is UPF0473 protein ABC1595 (Shouchella clausii (strain KSM-K16) (Alkalihalobacillus clausii)).